Here is a 120-residue protein sequence, read N- to C-terminus: Basic phospholipase A2 homolog piratoxin-3 (120 aa).

Disulfide bonds link C26-C113, C28-C44, C43-C94, C49-C120, C50-C87, C57-C81, and C75-C85. Positions 104–115 are important for membrane-damaging activities in eukaryotes and bacteria; heparin-binding; sequence KKYRYHLKPCKK.

The protein belongs to the phospholipase A2 family. Group II subfamily. D49 sub-subfamily. Homodimer; non-covalently linked (probable alternative/compact dimer conformation). Expressed by the venom gland.

The protein resides in the secreted. In terms of biological role, snake venom phospholipase A2 (PLA2) that lacks enzymatic activity. Shows high myotoxin activities. Also has anticoagulant activity. A model of myotoxic mechanism has been proposed: an apo Lys49-PLA2 is activated by the entrance of a hydrophobic molecule (e.g. fatty acid) at the hydrophobic channel of the protein leading to a reorientation of a monomer. This reorientation causes a transition between 'inactive' to 'active' states, causing alignment of C-terminal and membrane-docking sites (MDoS) side-by-side and putting the membrane-disruption sites (MDiS) in the same plane, exposed to solvent and in a symmetric position for both monomers. The MDoS region stabilizes the toxin on membrane by the interaction of charged residues with phospholipid head groups. Subsequently, the MDiS region destabilizes the membrane with penetration of hydrophobic residues. This insertion causes a disorganization of the membrane, allowing an uncontrolled influx of ions (i.e. calcium and sodium), and eventually triggering irreversible intracellular alterations and cell death. The protein is Basic phospholipase A2 homolog piratoxin-3 of Bothrops pirajai (Piraja's lancehead).